Consider the following 100-residue polypeptide: Cell division topological specificity factor (100 aa).

The protein belongs to the MinE family.

In terms of biological role, prevents the cell division inhibition by proteins MinC and MinD at internal division sites while permitting inhibition at polar sites. This ensures cell division at the proper site by restricting the formation of a division septum at the midpoint of the long axis of the cell. This Synechococcus sp. (strain JA-2-3B'a(2-13)) (Cyanobacteria bacterium Yellowstone B-Prime) protein is Cell division topological specificity factor.